Reading from the N-terminus, the 78-residue chain is Defensin beta 136 (78 aa).

Positions 1–21 (MNLCLSSLLFFLVILLPSGKG) are cleaved as a signal peptide. Cystine bridges form between C33/C60, C40/C54, and C44/C61.

This sequence belongs to the beta-defensin family.

The protein resides in the secreted. Its function is as follows. Host defense peptide that exhibits antimicrobial and antifungal activity. Exhibits antimicrobial activity against E.coli, S.aureus and C.albicans (in vitro). Has high lipopolysaccharide (LPS)-binding affinity, and may thereby be involved in immunoregulation through LPS neutralization. In Pan troglodytes (Chimpanzee), this protein is Defensin beta 136 (DEFB136).